Reading from the N-terminus, the 132-residue chain is DNA-directed RNA polymerase subunit omega (132 aa).

The tract at residues 89–109 (HSSESESIFNTSSQEEGTSFD) is disordered. Positions 96–105 (IFNTSSQEEG) are enriched in polar residues.

Belongs to the RNA polymerase subunit omega family. The RNAP catalytic core consists of 2 alpha, 1 beta, 1 beta' and 1 omega subunit. When a sigma factor is associated with the core the holoenzyme is formed, which can initiate transcription.

It carries out the reaction RNA(n) + a ribonucleoside 5'-triphosphate = RNA(n+1) + diphosphate. In terms of biological role, promotes RNA polymerase assembly. Latches the N- and C-terminal regions of the beta' subunit thereby facilitating its interaction with the beta and alpha subunits. This Bartonella tribocorum (strain CIP 105476 / IBS 506) protein is DNA-directed RNA polymerase subunit omega.